Here is a 219-residue protein sequence, read N- to C-terminus: Inner membrane protein YghB (219 aa).

Residues methionine 1–alanine 17 lie on the Cytoplasmic side of the membrane. Residues alanine 18 to leucine 38 form a helical membrane-spanning segment. At glutamate 39–aspartate 67 the chain is on the periplasmic side. A helical transmembrane segment spans residues phenylalanine 68–isoleucine 88. The Cytoplasmic portion of the chain corresponds to glutamine 89 to serine 160. The helical transmembrane segment at glycine 161–valine 181 threads the bilayer. The Periplasmic portion of the chain corresponds to lysine 182–phenylalanine 191. Residues leucine 192–isoleucine 212 traverse the membrane as a helical segment. The Cytoplasmic portion of the chain corresponds to lysine 213 to alanine 219.

It belongs to the DedA family.

It localises to the cell inner membrane. The protein is Inner membrane protein YghB (yghB) of Escherichia coli O6:H1 (strain CFT073 / ATCC 700928 / UPEC).